The primary structure comprises 443 residues: Fatty acid desaturase 3 (443 aa).

At 1-130 the chain is on the cytoplasmic side; the sequence is MGGVGEPDWE…EDMKLFEAKP (130 aa). Residues 18–95 form the Cytochrome b5 heme-binding domain; it reads LPTLRWEQVR…LQPLLIGELA (78 aa). A helical membrane pass occupies residues 131–151; the sequence is AFFGLLLGHILAMEVLAWLMI. Y152 is a topological domain (lumenal). A helical membrane pass occupies residues 153–173; the sequence is MLGPGWVPSTLAALILAISQA. The Cytoplasmic segment spans residues 174–259; it reads QSWCLQHDLG…KKKRRYLPYN (86 aa). Positions 180 to 184 match the Histidine box-1 motif; it reads HDLGH. A Histidine box-2 motif is present at residues 217–221; that stretch reads HFQHH. The helical transmembrane segment at 260 to 280 threads the bilayer; that stretch reads HQHLYFFLIGPPLLTLVNFEV. The Lumenal segment spans residues 281 to 282; sequence EN. The helical transmembrane segment at 283–303 threads the bilayer; that stretch reads LAYMLVCMQWMDLLWAASFYA. Residue R304 is a topological domain, cytoplasmic. A helical membrane pass occupies residues 305–325; the sequence is FLLSYIPFYGIPGALLLFVAV. Topologically, residues 326 to 443 are lumenal; sequence RVLESHWFVW…NVWLEAYLHQ (118 aa). A Histidine box-3 motif is present at residues 381–385; sequence QIEHH.

It belongs to the fatty acid desaturase type 1 family.

The protein resides in the endoplasmic reticulum membrane. It carries out the reaction an N-acylsphing-4-enine + 2 Fe(II)-[cytochrome b5] + O2 + 2 H(+) = an N-acyl-sphinga-4E,14Z-dienine + 2 Fe(III)-[cytochrome b5] + 2 H2O. The enzyme catalyses N-(hexanoyl)sphing-4-enine + 2 Fe(II)-[cytochrome b5] + O2 + 2 H(+) = N-hexanoyl-sphinga-4E,14Z-dienine + 2 Fe(III)-[cytochrome b5] + 2 H2O. It catalyses the reaction sphing-4-enine + 2 Fe(II)-[cytochrome b5] + O2 + 2 H(+) = sphinga-4E,14Z-dienine + 2 Fe(III)-[cytochrome b5] + 2 H2O. The catalysed reaction is (11E)-octadecenoyl-CoA + 2 Fe(II)-[cytochrome b5] + O2 + 2 H(+) = (11E,13Z)-octadecadienoyl-CoA + 2 Fe(III)-[cytochrome b5] + 2 H2O. It carries out the reaction N-acyl-1-deoxysphinganine + 2 Fe(II)-[cytochrome b5] + O2 + 2 H(+) = N-acyl-1-deoxysphing-14Z-enine + 2 Fe(III)-[cytochrome b5] + 2 H2O. The enzyme catalyses an N-acylsphinganine + 2 Fe(II)-[cytochrome b5] + O2 + 2 H(+) = an N-acylsphing-14Z-enine + 2 Fe(III)-[cytochrome b5] + 2 H2O. Its pathway is lipid metabolism; polyunsaturated fatty acid biosynthesis. It functions in the pathway lipid metabolism; sphingolipid metabolism. In terms of biological role, mammals have different sphingoid bases that differ in their length and/or pattern of desaturation and hydroxyl groups. The predominant sphingoid base that comprises mammalian ceramides is sphing-4-enine (sphingosine or SPH) which has a trans (E) desaturation at carbon 4. FADS3 is a desaturase that introduces a cis (Z) double bond between carbon 14 and carbon 15 of the sphingoid base (also known as long chain base, LCB), producing LCBs such as sphinga-4,14-dienine (SPD, d18:2(4E,14Z)) from SPH. Prefers SPH-containing ceramides (N-acylsphing-4-enines) as substrates. Capable of metabolizing also the SPH in its free form. SPD ceramides occur widely in mammalian tissues and cells. Due to their unusual structure containing a cis double bond, SPD ceramides may have an opposite, negative role in lipid microdomain formation relative to conventional ceramides. Could be involved in the detoxification of 1-deoxy sphingolipids, by desaturating the cytotoxic 1-deoxysphinganine (1-deoxySA, m18:0), produced under pathological conditions, to 1-deoxysphingenine (1-deoxysphingosine, 1-deoxySO, m18:1). Although prefers SPH-containing ceramides (N-acylsphing-4-enines) as substrates, it also exhibits activity toward dihydrosphingosine-containing CERs (N-acylsphinganines) and produces 14Z-SPH-containing sphingolipids. Its desaturase mechanism involves an electron transfer facilitated by cytochrome b5. FADS3 also acts as a methyl-end fatty acyl coenzyme A (CoA) desaturase that introduces a cis double bond between the preexisting double bond and the terminal methyl group of the fatty acyl chain. Desaturates (11E)-octadecenoate (trans-vaccenoate, the predominant trans fatty acid in human milk) at carbon 13 to generate (11E,13Z)-octadecadienoate (also known as conjugated linoleic acid 11E,13Z-CLA). The protein is Fatty acid desaturase 3 of Bos taurus (Bovine).